The following is a 654-amino-acid chain: DNA ligase (654 aa).

Residues 31–35, 80–81, and glutamate 109 contribute to the NAD(+) site; these read DSEYD and SL. Lysine 111 serves as the catalytic N6-AMP-lysine intermediate. Arginine 132, glutamate 166, lysine 280, and lysine 304 together coordinate NAD(+). Cysteine 398, cysteine 401, cysteine 416, and cysteine 421 together coordinate Zn(2+). A BRCT domain is found at 579 to 654; it reads NIEGILSGKT…IWSEQDLLDL (76 aa).

Belongs to the NAD-dependent DNA ligase family. LigA subfamily. Mg(2+) serves as cofactor. It depends on Mn(2+) as a cofactor.

It catalyses the reaction NAD(+) + (deoxyribonucleotide)n-3'-hydroxyl + 5'-phospho-(deoxyribonucleotide)m = (deoxyribonucleotide)n+m + AMP + beta-nicotinamide D-nucleotide.. DNA ligase that catalyzes the formation of phosphodiester linkages between 5'-phosphoryl and 3'-hydroxyl groups in double-stranded DNA using NAD as a coenzyme and as the energy source for the reaction. It is essential for DNA replication and repair of damaged DNA. This is DNA ligase from Lactococcus lactis subsp. lactis (strain IL1403) (Streptococcus lactis).